The chain runs to 712 residues: Follistatin-like domain-containing protein DDB_G0289517 (712 aa).

Residues 1–21 form the signal peptide; sequence MKIQTIIQIVLISFLFLNVES. Asparagine 102 carries N-linked (GlcNAc...) asparagine glycosylation. The interval 181 to 400 is disordered; the sequence is DIYNHLNPDS…SSSPVHQDPC (220 aa). Positions 192-203 are enriched in basic and acidic residues; that stretch reads QFKDKPNHENHK. Basic residues predominate over residues 204-214; sequence KDKNNKKHKKD. N-linked (GlcNAc...) asparagine glycans are attached at residues asparagine 217 and asparagine 234. Over residues 220 to 251 the composition is skewed to low complexity; it reads DKNNNNNNNNNNKKNKTINNNEPNQNQQSNPI. Polar residues predominate over residues 254–269; it reads TFNNETPFPWNFKNQD. Positions 270–281 are enriched in low complexity; sequence QQQQKQEQTQKQ. Polar residues predominate over residues 301–321; it reads KEPTTHLNTIEPTSFTASASR. The span at 330–339 shows a compositional bias: acidic residues; the sequence is KDEENIDENN. The segment covering 352 to 364 has biased composition (basic and acidic residues); sequence DDKSKKPKDDEKH. The N-linked (GlcNAc...) asparagine glycan is linked to asparagine 369. Positions 374–384 are enriched in acidic residues; it reads PADDPSIEITE. The span at 386 to 395 shows a compositional bias: polar residues; sequence PTITPSSSPV. Follistatin-like domains lie at 399–421 and 471–494; these read PCKK…AYCK and TCST…PYCQ. Asparagine 407 carries an N-linked (GlcNAc...) asparagine glycan. Asparagine 505, asparagine 524, and asparagine 566 each carry an N-linked (GlcNAc...) asparagine glycan. The Follistatin-like 3 domain maps to 596–618; it reads SCETLLCEGVNSYCVENGGPICK. Residue asparagine 622 is glycosylated (N-linked (GlcNAc...) asparagine). Follistatin-like domains lie at 660–682 and 687–710; these read SCSV…PKCY and ECSN…GACL.

Its subcellular location is the secreted. The polypeptide is Follistatin-like domain-containing protein DDB_G0289517 (Dictyostelium discoideum (Social amoeba)).